A 118-amino-acid polypeptide reads, in one-letter code: Large ribosomal subunit protein bL20 (118 aa).

Belongs to the bacterial ribosomal protein bL20 family.

Binds directly to 23S ribosomal RNA and is necessary for the in vitro assembly process of the 50S ribosomal subunit. It is not involved in the protein synthesizing functions of that subunit. This Pseudomonas syringae pv. syringae (strain B728a) protein is Large ribosomal subunit protein bL20.